A 158-amino-acid polypeptide reads, in one-letter code: Small ribosomal subunit protein uS9 (158 aa).

Polar residues predominate over residues 1–10 (MSDTMQSLDQ). The segment at 1 to 35 (MSDTMQSLDQLSALKTAAPDAPKREKKVDKQGRAY) is disordered. Over residues 21-32 (APKREKKVDKQG) the composition is skewed to basic and acidic residues.

It belongs to the universal ribosomal protein uS9 family.

The chain is Small ribosomal subunit protein uS9 from Afipia carboxidovorans (strain ATCC 49405 / DSM 1227 / KCTC 32145 / OM5) (Oligotropha carboxidovorans).